The sequence spans 804 residues: Pentatricopeptide repeat-containing protein At4g35130, chloroplastic (804 aa).

A chloroplast-targeting transit peptide spans 1–19; that stretch reads MAATLLSQCYRIYNSDACK. PPR repeat units lie at residues 63–93, 94–128, 129–163, 164–194, 195–229, 230–264, 266–296, 297–332, 333–363, 364–394, 395–429, 430–464, 465–495, 496–530, 531–561, and 567–597; these read NDPALTRALRGFADSRLMEDALQLFDEMNKA, DAFLWNVMIKGFTSCGLYIEAVQFYSRMVFAGVKA, DTFTYPFVIKSVAGISSLEEGKKIHAMVIKLGFVS, DVYVCNSLISLYMKLGCAWDAEKVFEEMPER, DIVSWNSMISGYLALGDGFSSLMLFKEMLKCGFKP, DRFSTMSALGACSHVYSPKMGKEIHCHAVRSRIET, DVMVMTSILDMYSKYGEVSYAERIFNGMIQR, NIVAWNVMIGCYARNGRVTDAFLCFQKMSEQNGLQP, DVITSINLLPASAILEGRTIHGYAMRRGFLP, HMVLETALIDMYGECGQLKSAEVIFDRMAEK, NVISWNSIIAAYVQNGKNYSALELFQELWDSSLVP, DSTTIASILPAYAESLSLSEGREIHAYIVKSRYWS, NTIILNSLVHMYAMCGDLEDARKCFNHILLK, DVVSWNSIIMAYAVHGFGRISVWLFSEMIASRVNP, NKSTFASLLAACSISGMVDEGWEYFESMKRE, and GIEHYGCMLDLIGRTGNFSAAKRFLEEMPFV. The interval 602–677 is type E motif; the sequence is IWGSLLNASR…TSSRSTVEAK (76 aa). The tract at residues 678–708 is type E(+) motif; the sequence is GKSHVFTNGDRSHVATNKIYEVLDVVSRMVG. The interval 710 to 804 is type DYW motif; sequence EDIYVHCVSR…NGRCSCGNYW (95 aa).

This sequence belongs to the PPR family. PCMP-H subfamily.

Its subcellular location is the plastid. The protein localises to the chloroplast. This chain is Pentatricopeptide repeat-containing protein At4g35130, chloroplastic (PCMP-H27), found in Arabidopsis thaliana (Mouse-ear cress).